The primary structure comprises 550 residues: Homeobox and leucine zipper protein Homez (550 aa).

A compositionally biased stretch (pro residues) spans 1-10 (MVRGWEPPPG). The disordered stretch occupies residues 1–36 (MVRGWEPPPGLDCAISEGHKSEGTMPPNKEASGLSS). Residues 55 to 114 (WTQAAQTSELDSNEHLLKTFSYFPYPSLADIALLCLRYGLQMEKVKTWFMAQRLRCGISW) constitute a DNA-binding region (homeobox 1). Residues 168–199 (GPPTLSKPTQTKGLKVEPEEPSQMPPLPQSHQ) form a disordered region. Glycyl lysine isopeptide (Lys-Gly) (interchain with G-Cter in SUMO2) cross-links involve residues Lys-182, Lys-200, and Lys-202. Positions 223-265 (LQSSGLSKEQAGRGPNQSHGIGTASWNHSTTVPQPQARDKPPP) are disordered. Residues 237-256 (PNQSHGIGTASWNHSTTVPQ) show a composition bias toward polar residues. Residue Ser-351 is modified to Phosphoserine. DNA-binding regions (homeobox) lie at residues 355–415 (QRQR…KHGQ) and 451–510 (TPPL…AEVV). The short motif at 358–363 (RKTKRK) is the Nuclear localization signal element. Disordered regions lie at residues 424–465 (VPGA…DIQP) and 512–550 (CLDE…IIQD). Thr-451 is subject to Phosphothreonine. Positions 452–463 (PPLPIPPPPPDI) are enriched in pro residues. The segment covering 513 to 550 (LDEEEEEEEEELPEDDEEEEEEEEEDDDDDDDDVIIQD) has biased composition (acidic residues).

Homodimer or heterodimer (Potential). Interacts with HOXC8. Ubiquitous. Strongly expressed in adult testis and kidney as well as fetal lung and kidney.

Its subcellular location is the nucleus. In terms of biological role, may function as a transcriptional regulator. The polypeptide is Homeobox and leucine zipper protein Homez (HOMEZ) (Homo sapiens (Human)).